Reading from the N-terminus, the 405-residue chain is Serpin B12 (405 aa).

Residues 64–83 (SQNESKEPDPCLKSNKQKAG) form a disordered region.

Belongs to the serpin family. Ov-serpin subfamily. As to quaternary structure, interacts with SLFN12; as part of a pathway regulating cell differentiation. May interact with USP14. In terms of tissue distribution, expressed in many tissues, including brain, bone marrow, lymph node, heart, lung, liver, pancreas, testis, ovary, and intestine.

The protein localises to the cytoplasm. Inhibits trypsin and plasmin, but not thrombin, coagulation factor Xa, or urokinase-type plasminogen activator. May play a role in cell differentiation. This chain is Serpin B12 (SERPINB12), found in Homo sapiens (Human).